Consider the following 396-residue polypeptide: Transcription factor IIIB 50 kDa subunit (396 aa).

A TFIIB-type zinc finger spans residues 3–36 (GAKRCPDCGSSEIVEDAHYSQDQLVCADCGCILS). Residues Cys-7, Cys-10, Cys-28, and Cys-31 each contribute to the Zn(2+) site. Residues 173–249 (VKSHCRSFKL…SRRLSCSLSR (77 aa)) form repeat 2. The residue at position 342 (Cys-342) is a Cysteine sulfenic acid (-SOH).

Belongs to the TFIIB family. Component of TFIIIB complexes. Interacts with TBP and forms a ternary complex with TBp and target DNA sequences. In response to oxidative stress, a Cys-residue is reversibly oxidized to cysteine sulfenic acid. This impairs formation of a ternary complex with TBP and DNA and down-regulates expression of target genes in response to oxidative stress.

It localises to the nucleus. Functionally, general activator of RNA polymerase III transcription. Factor exclusively required for RNA polymerase III transcription of genes with promoter elements upstream of the initiation sites. Contributes to the regulation of gene expression; functions as activator in the absence of oxidative stress. Down-regulates expression of target genes in response to oxidative stress. Overexpression protects cells against apoptosis in response to oxidative stress. This chain is Transcription factor IIIB 50 kDa subunit (brf2), found in Xenopus laevis (African clawed frog).